Reading from the N-terminus, the 396-residue chain is S-adenosylmethionine synthase 2 (396 aa).

E13 is a Mg(2+) binding site. H19 contacts ATP. E47 contacts K(+). L-methionine contacts are provided by E60 and Q103. Residues 171–173, 239–242, D250, 256–257, A273, K277, and K281 contribute to the ATP site; these read DGK, SGRF, and RK. D250 contributes to the L-methionine binding site. K281 contacts L-methionine.

This sequence belongs to the AdoMet synthase family. In terms of assembly, homotetramer. Requires Mn(2+) as cofactor. The cofactor is Mg(2+). Co(2+) is required as a cofactor. It depends on K(+) as a cofactor.

It localises to the cytoplasm. The enzyme catalyses L-methionine + ATP + H2O = S-adenosyl-L-methionine + phosphate + diphosphate. Its pathway is amino-acid biosynthesis; S-adenosyl-L-methionine biosynthesis; S-adenosyl-L-methionine from L-methionine: step 1/1. Functionally, catalyzes the formation of S-adenosylmethionine from methionine and ATP. The reaction comprises two steps that are both catalyzed by the same enzyme: formation of S-adenosylmethionine (AdoMet) and triphosphate, and subsequent hydrolysis of the triphosphate. This is S-adenosylmethionine synthase 2 (SAM2) from Dianthus caryophyllus (Carnation).